The chain runs to 135 residues: Phosphomevalonate dehydratase small subunit (135 aa).

The active-site Proton acceptor is S67.

Belongs to the AcnX type II small subunit family. Heterodimer composed of a large subunit (PMDh-L) and a small subunit (PMDh-S).

The enzyme catalyses (R)-5-phosphomevalonate = (2E)-3-methyl-5-phosphooxypent-2-enoate + H2O. It participates in isoprenoid biosynthesis; isopentenyl diphosphate biosynthesis via mevalonate pathway. Component of a hydro-lyase that catalyzes the dehydration of mevalonate 5-phosphate (MVA5P) to form trans-anhydromevalonate 5-phosphate (tAHMP). Involved in the archaeal mevalonate (MVA) pathway, which provides fundamental precursors for isoprenoid biosynthesis, such as isopentenyl diphosphate (IPP) and dimethylallyl diphosphate (DMAPP). The chain is Phosphomevalonate dehydratase small subunit from Methanopyrus kandleri (strain AV19 / DSM 6324 / JCM 9639 / NBRC 100938).